A 188-amino-acid chain; its full sequence is Vascular endothelial growth factor A-A (188 aa).

The signal sequence occupies residues 1–23 (MNLVVYLIQLFLAALLHLSAVKA). Cystine bridges form between C49–C91, C80–C125, and C84–C127. A glycan (N-linked (GlcNAc...) asparagine) is linked at N98.

It belongs to the PDGF/VEGF growth factor family. As to quaternary structure, homodimer; disulfide-linked. Isoform VEGF165 binds kdr and kdrl. Predominantly expressed in regions associated with active vascularization. From 15-16 hours post-fertilization (hpf), expressed in the anterior forebrain, the mesoderm underlying and lateral to the anterior hindbrain, the mesoderm underlying and lateral to the posterior hindbrain, and in the ventral medial portions of the somites. By 30-36 hpf, expression in the somites is decreased, while strong expression is observed in the region of the developing glomeruli and in the anterior portion of the pronephric ducts, the pharyngeal arches, and the brain. By 72 hpf, expression remains only in the pronephros region.

The protein localises to the secreted. In terms of biological role, growth factor active in angiogenesis, vasculogenesis and endothelial cell growth. Induces endothelial cell proliferation, promotes cell migration, inhibits apoptosis, and induces permeabilization of blood vessels. Required for intersegmental vessel development in the tail during embryogenesis. Acts both upstream of kdr and tie1 to stimulate endothelial cell differentiation, and upstream of gata1 to stimulate hematopoietic cell differentiation. The protein is Vascular endothelial growth factor A-A (vegfaa) of Danio rerio (Zebrafish).